Reading from the N-terminus, the 852-residue chain is Alanine--tRNA ligase (852 aa).

Residues histidine 554, histidine 558, cysteine 656, and histidine 660 each coordinate Zn(2+).

It belongs to the class-II aminoacyl-tRNA synthetase family. Zn(2+) serves as cofactor.

The protein resides in the cytoplasm. It catalyses the reaction tRNA(Ala) + L-alanine + ATP = L-alanyl-tRNA(Ala) + AMP + diphosphate. Functionally, catalyzes the attachment of alanine to tRNA(Ala) in a two-step reaction: alanine is first activated by ATP to form Ala-AMP and then transferred to the acceptor end of tRNA(Ala). Also edits incorrectly charged Ser-tRNA(Ala) and Gly-tRNA(Ala) via its editing domain. The polypeptide is Alanine--tRNA ligase (Campylobacter curvus (strain 525.92)).